The primary structure comprises 330 residues: Urokinase plasminogen activator surface receptor (330 aa).

Positions 1 to 20 (MGQPLLLLLLVYTYIPGSWG) are cleaved as a signal peptide. UPAR/Ly6 domains are found at residues 21 to 112 (LRCL…RNRY), 113 to 208 (LECA…PPNG), and 209 to 300 (LQCY…PGKG). 3 disulfide bridges follow: Cys-23/Cys-44, Cys-26/Cys-32, and Cys-37/Cys-65. An N-linked (GlcNAc...) asparagine glycan is attached at Asn-28. Asn-72 carries N-linked (GlcNAc...) asparagine glycosylation. Intrachain disulfides connect Cys-91-Cys-96, Cys-115-Cys-142, Cys-118-Cys-125, Cys-135-Cys-164, Cys-170-Cys-187, Cys-188-Cys-193, Cys-211-Cys-239, Cys-214-Cys-222, Cys-232-Cys-258, Cys-264-Cys-282, and Cys-283-Cys-288. 2 N-linked (GlcNAc...) asparagine glycosylation sites follow: Asn-179 and Asn-189. N-linked (GlcNAc...) asparagine glycosylation occurs at Asn-279. Gly-300 is lipidated: GPI-anchor amidated glycine. A propeptide spans 301-330 (GAPKTSPAHLSFFVSLLLTARLWGATLLCT) (removed in mature form).

Monomer. Interacts (via the UPAR/Ly6 domains) with SRPX2. Interacts with MRC2. Interacts with SORL1 (via N-terminal ectodomain); this interaction decreases PLAUR internalization. The ternary complex composed of PLAUR-PLAU-SERPINE1 also interacts with SORL1. Interacts with CD82; this interaction prevents PLAUR from binding to its high affinity ligand PLAU.

The protein resides in the cell membrane. In terms of biological role, acts as a receptor for urokinase plasminogen activator. Plays a role in localizing and promoting plasmin formation. Mediates the proteolysis-independent signal transduction activation effects of U-PA. The sequence is that of Urokinase plasminogen activator surface receptor (PLAUR) from Bos taurus (Bovine).